Reading from the N-terminus, the 1009-residue chain is DENN domain-containing protein 2A (1009 aa).

Disordered stretches follow at residues 15–153, 171–334, 434–479, and 498–532; these read AEAS…LRFQ, KDGS…HRKS, KLLD…KKRK, and KRVK…LKAH. 4 stretches are compositionally biased toward basic and acidic residues: residues 45 to 59, 130 to 147, 218 to 247, and 275 to 284; these read NIKD…KKEV, QPER…EPRL, HPSD…DRSL, and HAGEGDKDGK. Residues 297-314 are compositionally biased toward pro residues; sequence PPLPSLPPPPLPSSPPPS. Basic and acidic residues predominate over residues 434–443; the sequence is KLLDTRKLSR. Residues 503 to 513 show a composition bias toward polar residues; that stretch reads LSQSMESNSGK. Residue serine 551 is modified to Phosphoserine. The uDENN domain occupies 566 to 715; the sequence is EYFVVVSLHK…PFPALGKTIL (150 aa). In terms of domain architecture, cDENN spans 737–870; it reads RLEHVDFESL…LQVALEHILE (134 aa). A dDENN domain is found at 872–969; it reads RNELACEQDE…QERELRRQDA (98 aa).

Its subcellular location is the cytoplasm. The protein resides in the cytoskeleton. Guanine nucleotide exchange factor (GEF) which may activate RAB9A and RAB9B. Promotes the exchange of GDP to GTP, converting inactive GDP-bound Rab proteins into their active GTP-bound form. May play a role in late endosomes back to trans-Golgi network/TGN transport. The chain is DENN domain-containing protein 2A (DENND2A) from Homo sapiens (Human).